Reading from the N-terminus, the 445-residue chain is Signal recognition particle 54 kDa protein (445 aa).

GTP-binding positions include 106-113, 186-190, and 244-247; these read GLQGSGKT, DTAGR, and TKLD.

Belongs to the GTP-binding SRP family. SRP54 subfamily. In terms of assembly, part of the signal recognition particle protein translocation system, which is composed of SRP and FtsY. Archaeal SRP consists of a 7S RNA molecule of 300 nucleotides and two protein subunits: SRP54 and SRP19.

The protein localises to the cytoplasm. It catalyses the reaction GTP + H2O = GDP + phosphate + H(+). In terms of biological role, involved in targeting and insertion of nascent membrane proteins into the cytoplasmic membrane. Binds to the hydrophobic signal sequence of the ribosome-nascent chain (RNC) as it emerges from the ribosomes. The SRP-RNC complex is then targeted to the cytoplasmic membrane where it interacts with the SRP receptor FtsY. This chain is Signal recognition particle 54 kDa protein, found in Methanobrevibacter smithii (strain ATCC 35061 / DSM 861 / OCM 144 / PS).